The primary structure comprises 475 residues: Trigger factor (475 aa).

The region spanning 165 to 250 is the PPIase FKBP-type domain; it reads GDRVTIDYLG…VKAVFRPDEL (86 aa). The span at 439–466 shows a compositional bias: basic and acidic residues; sequence EYDETDVPEEKPAKKKSAVKEKSAEKTS. The tract at residues 439–475 is disordered; that stretch reads EYDETDVPEEKPAKKKSAVKEKSAEKTSAKKKAPKKA.

The protein belongs to the FKBP-type PPIase family. Tig subfamily.

The protein localises to the cytoplasm. It catalyses the reaction [protein]-peptidylproline (omega=180) = [protein]-peptidylproline (omega=0). Involved in protein export. Acts as a chaperone by maintaining the newly synthesized protein in an open conformation. Functions as a peptidyl-prolyl cis-trans isomerase. This is Trigger factor from Bartonella tribocorum (strain CIP 105476 / IBS 506).